A 1203-amino-acid chain; its full sequence is DNA-directed RNA polymerase subunit beta (1203 aa).

The segment at 1167-1203 (LSKYAQQQEEQRKAAAQTDESKTAPATKNESQPNTQD) is disordered. Residues 1190-1203 (APATKNESQPNTQD) are compositionally biased toward polar residues.

Belongs to the RNA polymerase beta chain family. As to quaternary structure, the RNAP catalytic core consists of 2 alpha, 1 beta, 1 beta' and 1 omega subunit. When a sigma factor is associated with the core the holoenzyme is formed, which can initiate transcription.

It carries out the reaction RNA(n) + a ribonucleoside 5'-triphosphate = RNA(n+1) + diphosphate. In terms of biological role, DNA-dependent RNA polymerase catalyzes the transcription of DNA into RNA using the four ribonucleoside triphosphates as substrates. In Levilactobacillus brevis (strain ATCC 367 / BCRC 12310 / CIP 105137 / JCM 1170 / LMG 11437 / NCIMB 947 / NCTC 947) (Lactobacillus brevis), this protein is DNA-directed RNA polymerase subunit beta.